The primary structure comprises 306 residues: MQDLYPSRQRADAEMRPRLDPVVHSEWTNDAPISARQAAAFDRDGYIVLEDIFSADEVAFLQKAAGNLLADPAALDADTIVTEPQSNEIRSIFEIHAQSPVMARLAADARLADVARFLLGDEVYIHQSRLNYKPGFKGREFYWHSDFETWHVEDGMPRMRALSMSVLLAENTPHNGPLMVIPGSHRTYLTCVGETPDDHYLSSLKKQEYGVPDEESLAELAHRHGIVAPTGKPGTVILFDCNLMHGSNGNITPFPRANAFLVYNAVSNRLEKPFGVEKPRPWFLARRGEPAALRVERGPLVETVPA.

Position 127 (glutamine 127) interacts with L-ectoine. Residue lysine 133 participates in 2-oxoglutarate binding. The Fe cation site is built by histidine 144, aspartate 146, and histidine 245.

This sequence belongs to the PhyH family. EctD subfamily. Homodimer. The cofactor is Fe(2+).

The catalysed reaction is L-ectoine + 2-oxoglutarate + O2 = 5-hydroxyectoine + succinate + CO2. Involved in the biosynthesis of 5-hydroxyectoine, called compatible solute, which helps organisms to survive extreme osmotic stress by acting as a highly soluble organic osmolyte. Catalyzes the 2-oxoglutarate-dependent selective hydroxylation of L-ectoine to yield (4S,5S)-5-hydroxyectoine. The sequence is that of Ectoine dioxygenase from Sphingopyxis alaskensis (strain DSM 13593 / LMG 18877 / RB2256) (Sphingomonas alaskensis).